Consider the following 360-residue polypeptide: Phospho-N-acetylmuramoyl-pentapeptide-transferase (360 aa).

A run of 10 helical transmembrane segments spans residues 25-45, 73-93, 94-114, 134-154, 173-193, 198-218, 240-260, 262-282, 287-307, and 337-357; these read RTIYASLTALVISFVLGPWLI, TMGGVLIMSAVMFSTLLWADL, TNAYVWIALGVTFGFGLIGFV, FCLQVVVAGIAGTVLVYGLNG, PGYVLFAILVMVGASNAVNLT, GLAIVPVAIAAGTYMIFAYVA, VFCGALVGAGLGFLWYNAYPA, IFMGDVGSLPLGGALGVVAIL, LALVIVGGLFVMEAVSVILQV, and KVIVRFWIIAIMLALLSVSTL.

The protein belongs to the glycosyltransferase 4 family. MraY subfamily. Requires Mg(2+) as cofactor.

It localises to the cell inner membrane. The catalysed reaction is UDP-N-acetyl-alpha-D-muramoyl-L-alanyl-gamma-D-glutamyl-meso-2,6-diaminopimeloyl-D-alanyl-D-alanine + di-trans,octa-cis-undecaprenyl phosphate = di-trans,octa-cis-undecaprenyl diphospho-N-acetyl-alpha-D-muramoyl-L-alanyl-D-glutamyl-meso-2,6-diaminopimeloyl-D-alanyl-D-alanine + UMP. It participates in cell wall biogenesis; peptidoglycan biosynthesis. Catalyzes the initial step of the lipid cycle reactions in the biosynthesis of the cell wall peptidoglycan: transfers peptidoglycan precursor phospho-MurNAc-pentapeptide from UDP-MurNAc-pentapeptide onto the lipid carrier undecaprenyl phosphate, yielding undecaprenyl-pyrophosphoryl-MurNAc-pentapeptide, known as lipid I. The sequence is that of Phospho-N-acetylmuramoyl-pentapeptide-transferase from Desulfatibacillum aliphaticivorans.